The sequence spans 103 residues: Co-chaperonin GroES (103 aa).

This sequence belongs to the GroES chaperonin family. Heptamer of 7 subunits arranged in a ring. Interacts with the chaperonin GroEL.

The protein localises to the cytoplasm. Functionally, together with the chaperonin GroEL, plays an essential role in assisting protein folding. The GroEL-GroES system forms a nano-cage that allows encapsulation of the non-native substrate proteins and provides a physical environment optimized to promote and accelerate protein folding. GroES binds to the apical surface of the GroEL ring, thereby capping the opening of the GroEL channel. The chain is Co-chaperonin GroES from Thermosynechococcus vestitus (strain NIES-2133 / IAM M-273 / BP-1).